We begin with the raw amino-acid sequence, 348 residues long: tRNA pseudouridine synthase D (348 aa).

Catalysis depends on D81, which acts as the Nucleophile. One can recognise a TRUD domain in the interval 158-304 (GVPNYFGAQR…MRHERRSIEL (147 aa)).

The protein belongs to the pseudouridine synthase TruD family.

It catalyses the reaction uridine(13) in tRNA = pseudouridine(13) in tRNA. Responsible for synthesis of pseudouridine from uracil-13 in transfer RNAs. The polypeptide is tRNA pseudouridine synthase D (Aliivibrio salmonicida (strain LFI1238) (Vibrio salmonicida (strain LFI1238))).